The chain runs to 478 residues: Poly(A) RNA polymerase cid11 (478 aa).

The Mg(2+) site is built by Asp106 and Asp108. In terms of domain architecture, PAP-associated spans 263–317 (SLGRLLIDFFYYYGFSFNYLDSVVSVRSGTVLNKQEKGWAMEVNNSLCVEEPFNT). The segment at 428–447 (QSYENKANRDSDFQGQTSLT) is disordered.

This sequence belongs to the DNA polymerase type-B-like family. Mg(2+) is required as a cofactor. It depends on Mn(2+) as a cofactor.

It is found in the cytoplasm. The protein resides in the nucleus. The catalysed reaction is RNA(n) + ATP = RNA(n)-3'-adenine ribonucleotide + diphosphate. This chain is Poly(A) RNA polymerase cid11 (cid11), found in Schizosaccharomyces pombe (strain 972 / ATCC 24843) (Fission yeast).